We begin with the raw amino-acid sequence, 495 residues long: Glycerol kinase (495 aa).

Thr13 provides a ligand contact to ADP. 3 residues coordinate ATP: Thr13, Thr14, and Ser15. Residue Thr13 coordinates sn-glycerol 3-phosphate. Residue Arg17 participates in ADP binding. The sn-glycerol 3-phosphate site is built by Arg83, Glu84, Tyr135, and Asp244. Glycerol contacts are provided by Arg83, Glu84, Tyr135, Asp244, and Gln245. Positions 266 and 309 each coordinate ADP. ATP is bound by residues Thr266, Gly309, Gln313, and Gly410. ADP is bound by residues Gly410 and Asn414.

The protein belongs to the FGGY kinase family.

The catalysed reaction is glycerol + ATP = sn-glycerol 3-phosphate + ADP + H(+). The protein operates within polyol metabolism; glycerol degradation via glycerol kinase pathway; sn-glycerol 3-phosphate from glycerol: step 1/1. With respect to regulation, inhibited by fructose 1,6-bisphosphate (FBP). Its function is as follows. Key enzyme in the regulation of glycerol uptake and metabolism. Catalyzes the phosphorylation of glycerol to yield sn-glycerol 3-phosphate. The protein is Glycerol kinase of Shewanella woodyi (strain ATCC 51908 / MS32).